We begin with the raw amino-acid sequence, 305 residues long: Heterogeneous nuclear ribonucleoprotein A0 (305 aa).

Met-1 carries the post-translational modification N-acetylmethionine. The RRM 1 domain occupies 7 to 86 (CKLFIGGLNV…VELKRAVSRE (80 aa)). Ser-68 carries the phosphoserine modification. Lys-80 is covalently cross-linked (Glycyl lysine isopeptide (Lys-Gly) (interchain with G-Cter in SUMO2)). Residue Ser-84 is modified to Phosphoserine; by MAPKAPK2. Glycyl lysine isopeptide (Lys-Gly) (interchain with G-Cter in SUMO2) cross-links involve residues Lys-96, Lys-98, Lys-99, and Lys-106. The RRM 2 domain maps to 98 to 175 (KKLFVGGLKG…HRVEVKKAVP (78 aa)). Lys-133 bears the N6-acetyllysine mark. Arg-139 is modified (omega-N-methylarginine). Glycyl lysine isopeptide (Lys-Gly) (interchain with G-Cter in SUMO2) cross-links involve residues Lys-154, Lys-159, Lys-172, and Lys-176. 2 disordered regions span residues 178 to 211 (DIHA…RDQN) and 265 to 305 (QSSY…GGSF). Composition is skewed to gly residues over residues 181–211 (AGGG…RDQN) and 272–284 (KSGG…GSWG). An Omega-N-methylarginine modification is found at Arg-286. The segment covering 292-305 (YRGGYGGGYGGGSF) has biased composition (gly residues). Asymmetric dimethylarginine; alternate is present on Arg-293. The residue at position 293 (Arg-293) is a Dimethylated arginine; alternate. Arg-293 carries the post-translational modification Omega-N-methylarginine; alternate.

Post-translationally, phosphorylated at Ser-84 by MAPKAPK2 in response to LPS treatment, promoting stabilization of GADD45A mRNA. In terms of processing, arg-293 is dimethylated, probably to asymmetric dimethylarginine.

The protein resides in the nucleus. Functionally, mRNA-binding component of ribonucleosomes. Specifically binds AU-rich element (ARE)-containing mRNAs. Involved in post-transcriptional regulation of cytokines mRNAs. The sequence is that of Heterogeneous nuclear ribonucleoprotein A0 (Hnrnpa0) from Mus musculus (Mouse).